The following is a 500-amino-acid chain: Kynurenine 3-monooxygenase (500 aa).

It belongs to the aromatic-ring hydroxylase family. KMO subfamily. Requires FAD as cofactor.

The protein localises to the mitochondrion outer membrane. The enzyme catalyses L-kynurenine + NADPH + O2 + H(+) = 3-hydroxy-L-kynurenine + NADP(+) + H2O. It functions in the pathway cofactor biosynthesis; NAD(+) biosynthesis; quinolinate from L-kynurenine: step 1/3. Catalyzes the hydroxylation of L-kynurenine (L-Kyn) to form 3-hydroxy-L-kynurenine (L-3OHKyn). Required for synthesis of quinolinic acid. In Aspergillus terreus (strain NIH 2624 / FGSC A1156), this protein is Kynurenine 3-monooxygenase (bna4).